Here is a 149-residue protein sequence, read N- to C-terminus: UPF0179 protein Hlac_2319 (149 aa).

The protein belongs to the UPF0179 family.

This is UPF0179 protein Hlac_2319 from Halorubrum lacusprofundi (strain ATCC 49239 / DSM 5036 / JCM 8891 / ACAM 34).